Reading from the N-terminus, the 439-residue chain is Coiled-coil domain-containing protein 166 (439 aa).

Positions 1–28 (MAPKKKRGPSAGSQPGGAAAAGAEQPLS) are disordered. Low complexity predominate over residues 9-23 (PSAGSQPGGAAAAGA). Coiled coils occupy residues 27–74 (LSER…EENR) and 121–213 (DGVR…VRAL). The disordered stretch occupies residues 276 to 439 (PGGPPLWERP…AAAEASPGRA (164 aa)). Residues 338 to 365 (VLSSMDSRVPSLATSKVGSRMPSLTASR) show a composition bias toward polar residues. 2 stretches are compositionally biased toward low complexity: residues 376–392 (SLEGSGISSGSSPRVSS) and 428–439 (AEAAAEASPGRA).

The chain is Coiled-coil domain-containing protein 166 (CCDC166) from Homo sapiens (Human).